A 388-amino-acid polypeptide reads, in one-letter code: Succinate--CoA ligase [ADP-forming] subunit beta (388 aa).

Residues 9 to 244 (KEIFRSMGVA…LEEEDPKEIE (236 aa)) enclose the ATP-grasp domain. ATP-binding positions include Lys46, 53-55 (GRG), Glu99, Cys102, and Glu107. The Mg(2+) site is built by Asn199 and Asp213. Substrate-binding positions include Asn264 and 321 to 323 (GIM).

This sequence belongs to the succinate/malate CoA ligase beta subunit family. As to quaternary structure, heterotetramer of two alpha and two beta subunits. The cofactor is Mg(2+).

The catalysed reaction is succinate + ATP + CoA = succinyl-CoA + ADP + phosphate. It catalyses the reaction GTP + succinate + CoA = succinyl-CoA + GDP + phosphate. It participates in carbohydrate metabolism; tricarboxylic acid cycle; succinate from succinyl-CoA (ligase route): step 1/1. Its function is as follows. Succinyl-CoA synthetase functions in the citric acid cycle (TCA), coupling the hydrolysis of succinyl-CoA to the synthesis of either ATP or GTP and thus represents the only step of substrate-level phosphorylation in the TCA. The beta subunit provides nucleotide specificity of the enzyme and binds the substrate succinate, while the binding sites for coenzyme A and phosphate are found in the alpha subunit. This is Succinate--CoA ligase [ADP-forming] subunit beta from Staphylococcus aureus (strain bovine RF122 / ET3-1).